A 407-amino-acid chain; its full sequence is tRNA (guanine-N(7)-)-methyltransferase non-catalytic subunit wuho (407 aa).

WD repeat units lie at residues 83 to 124, 171 to 210, and 214 to 252; these read AIEV…ARLL, GHLS…DIHS, and GHKE…ELLI.

Belongs to the WD repeat TRM82 family. In terms of assembly, forms a heterodimer with the catalytic subunit Mettl1. Interacts with mei-P26 and weakly interacts with bgcn; required for the function or formation of the mei-P26-bgcn-bam-sxl complex. Interacts with nanos; may be involved in mei-P26-dependent derepression of the BMP signaling pathway. Interacts with Myc; the interaction may be mediated by mei-P26 and may be involved in the regulation of ribosome biogenesis. In terms of tissue distribution, in testis, it is present at high level in hub cells, a niche for germline stem cells of testis. Ubiquitously expressed in all testicular cells throughout spermatogenesis. Ubiquitously expressed in all germline and somatic cells of the ovary.

The protein resides in the nucleus. It localises to the cytoplasm. Its pathway is tRNA modification; N(7)-methylguanine-tRNA biosynthesis. Functionally, required for the Mettl1-dependent formation of N(7)-methylguanine at position 46 (m7G46) in tRNA. In the Mettl1-wuho methyltransferase complex, it is required to stabilize and induce conformational changes of the catalytic subunit. Required for binding of nanos mRNA and repression of translation by the mei-P26-bgcn-bam-sxl complex. May cooperate with mei-P26 and nanos to derepress the BMP signaling pathway. May cooperate with mei-P26 to suppress expression of a subset of microRNAs. May cooperate with mei-P26 to regulate bam expression levels in germline cells during gametogenesis. Required to promote mitosis to meiosis transition during gametogenesis. May regulate germline cell division in part by regulating ribosome biogenesis. The polypeptide is tRNA (guanine-N(7)-)-methyltransferase non-catalytic subunit wuho (Drosophila ananassae (Fruit fly)).